Reading from the N-terminus, the 115-residue chain is MNPLIQSLTEGQLRTDIPAFRPGDTVRVHAKVVEGTRERIQIFEGVVIARKGAGISENYTVRKISNGVGVERTFPIHTPRVDKIEVVRYGKVRRAKLYYLRALQGKAARIKEIRR.

Belongs to the bacterial ribosomal protein bL19 family.

Functionally, this protein is located at the 30S-50S ribosomal subunit interface and may play a role in the structure and function of the aminoacyl-tRNA binding site. This chain is Large ribosomal subunit protein bL19, found in Streptococcus gordonii (strain Challis / ATCC 35105 / BCRC 15272 / CH1 / DL1 / V288).